Here is a 308-residue protein sequence, read N- to C-terminus: UDP-N-acetylenolpyruvoylglucosamine reductase (308 aa).

One can recognise an FAD-binding PCMH-type domain in the interval 24–187 (RVGGPADWLF…VSASLQGVPG (164 aa)). The active site involves Arg167. Positions 199 to 230 (QLDKRDQTQPTKERSAGSTFRNPAGFSSTGRA) are disordered. Basic and acidic residues predominate over residues 200 to 213 (LDKRDQTQPTKERS). Residues 214-228 (AGSTFRNPAGFSSTG) are compositionally biased toward polar residues. Ser216 functions as the Proton donor in the catalytic mechanism. Glu298 is an active-site residue.

This sequence belongs to the MurB family. The cofactor is FAD.

The protein localises to the cytoplasm. It catalyses the reaction UDP-N-acetyl-alpha-D-muramate + NADP(+) = UDP-N-acetyl-3-O-(1-carboxyvinyl)-alpha-D-glucosamine + NADPH + H(+). It functions in the pathway cell wall biogenesis; peptidoglycan biosynthesis. In terms of biological role, cell wall formation. This is UDP-N-acetylenolpyruvoylglucosamine reductase from Ruegeria pomeroyi (strain ATCC 700808 / DSM 15171 / DSS-3) (Silicibacter pomeroyi).